Reading from the N-terminus, the 530-residue chain is GMP synthase [glutamine-hydrolyzing] (530 aa).

In terms of domain architecture, Glutamine amidotransferase type-1 spans 4–205 (RILILDYGSQ…VREICGCEGD (202 aa)). Cys-84 acts as the Nucleophile in catalysis. Residues His-179 and Glu-181 contribute to the active site. Positions 206 to 398 (WNMPDYISEA…LGLPPQMVYR (193 aa)) constitute a GMPS ATP-PPase domain. Residue 233–239 (SGGVDSS) participates in ATP binding.

As to quaternary structure, homodimer.

It carries out the reaction XMP + L-glutamine + ATP + H2O = GMP + L-glutamate + AMP + diphosphate + 2 H(+). Its pathway is purine metabolism; GMP biosynthesis; GMP from XMP (L-Gln route): step 1/1. In terms of biological role, catalyzes the synthesis of GMP from XMP. This chain is GMP synthase [glutamine-hydrolyzing], found in Bordetella avium (strain 197N).